We begin with the raw amino-acid sequence, 343 residues long: ATP-dependent 6-phosphofructokinase (343 aa).

Residues glycine 10, 73–74 (RV), and 103–106 (GEGT) contribute to the ATP site. Glutamate 104 contacts Mg(2+). Residues 126-128 (TID), arginine 163, 170-172 (MGR), glutamate 223, arginine 267, and 273-276 (HIQR) each bind substrate. Aspartate 128 acts as the Proton acceptor in catalysis.

This sequence belongs to the phosphofructokinase type A (PFKA) family. Mixed-substrate PFK group III subfamily. As to quaternary structure, homodimer or homotetramer. Mg(2+) serves as cofactor.

The protein resides in the cytoplasm. The catalysed reaction is beta-D-fructose 6-phosphate + ATP = beta-D-fructose 1,6-bisphosphate + ADP + H(+). It carries out the reaction D-tagatofuranose 6-phosphate + ATP = D-tagatofuranose 1,6-bisphosphate + ADP + H(+). It functions in the pathway carbohydrate degradation; glycolysis; D-glyceraldehyde 3-phosphate and glycerone phosphate from D-glucose: step 3/4. Functionally, catalyzes the phosphorylation of D-fructose 6-phosphate to fructose 1,6-bisphosphate by ATP, the first committing step of glycolysis. Can also catalyze the phosphorylation of tagatose-6-phosphate. This is ATP-dependent 6-phosphofructokinase from Mycobacterium tuberculosis (strain CDC 1551 / Oshkosh).